The sequence spans 163 residues: Nucleotide-binding protein Mflv_5248 (163 aa).

Belongs to the YajQ family.

Its function is as follows. Nucleotide-binding protein. This chain is Nucleotide-binding protein Mflv_5248, found in Mycolicibacterium gilvum (strain PYR-GCK) (Mycobacterium gilvum (strain PYR-GCK)).